The chain runs to 86 residues: Putative antitoxin VapB5 (86 aa).

Belongs to the phD/YefM antitoxin family. In terms of assembly, forms a complex with VapC5.

Its function is as follows. Probable antitoxin component of a probable type II toxin-antitoxin (TA) system. The cognate toxin is VapC5. The protein is Putative antitoxin VapB5 (vapB5) of Mycobacterium tuberculosis (strain CDC 1551 / Oshkosh).